Consider the following 492-residue polypeptide: N-succinylglutamate 5-semialdehyde dehydrogenase (492 aa).

NAD(+) is bound at residue 220–225 (GSANTG). Catalysis depends on residues glutamate 243 and cysteine 277.

The protein belongs to the aldehyde dehydrogenase family. AstD subfamily.

The enzyme catalyses N-succinyl-L-glutamate 5-semialdehyde + NAD(+) + H2O = N-succinyl-L-glutamate + NADH + 2 H(+). It functions in the pathway amino-acid degradation; L-arginine degradation via AST pathway; L-glutamate and succinate from L-arginine: step 4/5. Catalyzes the NAD-dependent reduction of succinylglutamate semialdehyde into succinylglutamate. The chain is N-succinylglutamate 5-semialdehyde dehydrogenase from Escherichia coli O17:K52:H18 (strain UMN026 / ExPEC).